A 211-amino-acid polypeptide reads, in one-letter code: Small ribosomal subunit protein uS3 (211 aa).

Residues 38 to 106 (LRSFVKKTFH…DVELHIVEVK (69 aa)) form the KH type-2 domain.

This sequence belongs to the universal ribosomal protein uS3 family. As to quaternary structure, part of the 30S ribosomal subunit. Forms a tight complex with proteins S10 and S14.

Functionally, binds the lower part of the 30S subunit head. Binds mRNA in the 70S ribosome, positioning it for translation. This chain is Small ribosomal subunit protein uS3, found in Anaplasma marginale (strain Florida).